The following is a 563-amino-acid chain: Zinc finger CCHC domain-containing protein 7 (563 aa).

Disordered stretches follow at residues 41–64 (SQNL…VPGA) and 133–157 (SHST…QNSS). Residues 133–142 (SHSTPKVSAP) show a composition bias toward polar residues. Residues 143-157 (QSNNFKSQKSCQNSS) show a composition bias toward low complexity. CCHC-type zinc fingers lie at residues 265 to 282 (VVCR…NCPV), 287 to 304 (PACC…SCPS), 305 to 322 (RYCL…ECIE), 328 to 345 (KTCH…ACPE), and 372 to 389 (VYCC…ECKE). Residues 443–494 (KVDAKPPAKKRKKKHPSKKERKGTIRDYECAETKQKKKHKKRKSGLQEIEGD) form a disordered region. The span at 449–463 (PAKKRKKKHPSKKER) shows a compositional bias: basic residues. Over residues 464–476 (KGTIRDYECAETK) the composition is skewed to basic and acidic residues. Residues 477-486 (QKKKHKKRKS) show a composition bias toward basic residues.

In terms of assembly, component of a nucleolar TRAMP-like complex, an ATP-dependent exosome regulatory complex consisting of a helicase (MTREX), an oligadenylate polymerase (PAPD5 or PAPD7), and a substrate specific RNA-binding factor (ZCCHC7 or ZCCHC8). Several TRAMP-like complexes exist with specific compositions and are associated with nuclear, or nucleolar RNA exosomes.

The protein resides in the nucleus. The protein localises to the nucleolus. This Xenopus laevis (African clawed frog) protein is Zinc finger CCHC domain-containing protein 7 (zcchc7).